A 309-amino-acid polypeptide reads, in one-letter code: Probable cell division protein kinase ECU11_1290 (309 aa).

Residues 4–288 (YENIKQVGEG…VISSHKNTYI (285 aa)) enclose the Protein kinase domain. Residues 10–18 (VGEGAFGQV) and Lys33 each bind ATP. Asp124 serves as the catalytic Proton acceptor.

This sequence belongs to the protein kinase superfamily. CMGC Ser/Thr protein kinase family. CDC2/CDKX subfamily.

The protein resides in the nucleus. It carries out the reaction L-seryl-[protein] + ATP = O-phospho-L-seryl-[protein] + ADP + H(+). The catalysed reaction is L-threonyl-[protein] + ATP = O-phospho-L-threonyl-[protein] + ADP + H(+). In terms of biological role, may play a role in the control of the eukaryotic cell cycle. This Encephalitozoon cuniculi (strain GB-M1) (Microsporidian parasite) protein is Probable cell division protein kinase ECU11_1290.